A 570-amino-acid polypeptide reads, in one-letter code: Endo-1,4-beta-xylanase 4 (570 aa).

Residues 1–24 form the signal peptide; sequence MKRFNYGFFHLVLFLISLLLLGSG. Asn92, Asn190, and Asn300 each carry an N-linked (GlcNAc...) asparagine glycan. The 300-residue stretch at 195–494 folds into the GH10 domain; it reads EGSVISIEQI…TQAGDLIDKL (300 aa). The Proton donor role is filled by Glu325. Residue Asn339 is glycosylated (N-linked (GlcNAc...) asparagine). Residue Glu432 is the Nucleophile of the active site. N-linked (GlcNAc...) asparagine glycosylation occurs at Asn545.

Belongs to the glycosyl hydrolase 10 (cellulase F) family.

The catalysed reaction is Endohydrolysis of (1-&gt;4)-beta-D-xylosidic linkages in xylans.. The protein operates within glycan degradation; xylan degradation. Its function is as follows. Binds to and hydrolyzes insoluble and soluble xylan substrates. The protein is Endo-1,4-beta-xylanase 4 of Arabidopsis thaliana (Mouse-ear cress).